The sequence spans 889 residues: Inter-alpha-trypsin inhibitor heavy chain H3 (889 aa).

A signal peptide spans 1–21; it reads MRTMWWPCLVLALLSGLETSG. A propeptide spanning residues 22–33 is cleaved from the precursor; sequence FPRSPLQLLGKR. A VIT domain is found at 29–158; sequence LLGKRSLPEG…KVTFELTYEE (130 aa). Residue N91 is glycosylated (N-linked (GlcNAc...) asparagine). Residues 284 to 467 enclose the VWFA domain; that stretch reads NIVFVIDVSG…LQLQGFYEEV (184 aa). N-linked (GlcNAc...) asparagine glycosylation is present at N580. At D649 the chain carries Aspartate 1-(chondroitin 4-sulfate)-ester. The propeptide occupies 650-889; the sequence is PHFIIQIPGK…HTDYIVPSLF (240 aa).

Belongs to the ITIH family. In terms of assembly, I-alpha-I plasma protease inhibitors are assembled from one or two heavy chains (HC) and one light chain, bikunin. Pre-alpha-inhibitor (P-alpha-I) is composed of ITIH3/HC3 and bikunin. In terms of processing, heavy chains are linked to bikunin via chondroitin 4-sulfate esterified to the alpha-carboxyl of the C-terminal aspartate after propeptide cleavage. Expressed in both liver and brain.

It is found in the secreted. In terms of biological role, may act as a carrier of hyaluronan in serum or as a binding protein between hyaluronan and other matrix protein, including those on cell surfaces in tissues to regulate the localization, synthesis and degradation of hyaluronan which are essential to cells undergoing biological processes. This chain is Inter-alpha-trypsin inhibitor heavy chain H3 (Itih3), found in Mus musculus (Mouse).